The sequence spans 87 residues: Small ribosomal subunit protein uS19 (87 aa).

The protein belongs to the universal ribosomal protein uS19 family.

In terms of biological role, protein S19 forms a complex with S13 that binds strongly to the 16S ribosomal RNA. In Mesoplasma florum (strain ATCC 33453 / NBRC 100688 / NCTC 11704 / L1) (Acholeplasma florum), this protein is Small ribosomal subunit protein uS19.